The chain runs to 597 residues: Indole-3-acetic acid-amido synthetase GH3.4 (597 aa).

It belongs to the IAA-amido conjugating enzyme family.

Functionally, catalyzes the synthesis of indole-3-acetic acid (IAA)-amino acid conjugates, providing a mechanism for the plant to cope with the presence of excess auxin. Strongly reactive with Glu, Gln, Trp, Asp, Ala, Leu, Phe, Gly, Tyr, Met, Ile and Val. Little or no product formation with His, Ser, Thr, Arg, Lys, or Cys. Also active on pyruvic and butyric acid analogs of IAA, PAA and the synthetic auxin naphthaleneacetic acid (NAA). The two chlorinated synthetic auxin herbicides 2,4-D and 3,6-dichloro-o-anisic acid (dicamba) cannot be used as substrates. The polypeptide is Indole-3-acetic acid-amido synthetase GH3.4 (GH3.4) (Arabidopsis thaliana (Mouse-ear cress)).